The chain runs to 357 residues: MSKCGRKKYMRTNVRQMTMETVESQQDRSVTRSVAEHSSAHMQTGQISVPTLAQVSVAGSGTGRGSPAVTLVQLPSGQTVQVQGVIQTPHPSVIQSPQIQTVQVATIAETDDSADSEVIDSHKRREILSRRPSYRKILNELSSDVPGIPKIEEEKSEEEGTPPNIATMAVPTSIYQTSTGQYIAIAQGGTIQISNPGSDGVQGLQALTMTNSGAPPPGATIVQYAAQSADGTQQFFVPGSQVVVQDEETDLAPSHMAAATGDMPTYQIRAPTTALPQGVVMAASPGSLHSPQQLAEEATRKRELRLMKNREAAKECRRRKKEYVKCLESRVAVLEVQNKKLIEELETLKDICSPKTD.

Residues glutamate 20–glutamine 43 form a disordered region. Over residues glutamine 25–serine 39 the composition is skewed to basic and acidic residues. One can recognise a KID domain in the interval threonine 101 to glycine 160. A phosphoserine mark is found at serine 116, serine 142, serine 284, serine 287, and serine 290. A bZIP domain is found at threonine 299–aspartate 357. The segment at arginine 300–lysine 325 is basic motif. Positions leucine 327–leucine 348 are leucine-zipper.

This sequence belongs to the bZIP family. In terms of assembly, binds DNA as a dimer. Interacts with CDC34. Interacts with FHL5. May interact with TSSK4. Isoform 1 forms a heterodimer with CREB3L4. In terms of processing, stimulated by phosphorylation. Phosphorylated on Ser-116 by TSSK4 in vitro. Post-translationally, ubiquitinated by CDC34 and RAD6B in order to be degraded by the proteasome. As to expression, expressed in the testis.

Its subcellular location is the nucleus. The protein resides in the cytoplasm. In terms of biological role, transcriptional regulator that binds the cAMP response element (CRE), a sequence present in many viral and cellular promoters. Isoforms are either transcriptional activators or repressors. Isoform 2, isoform 3 and isoform 4 are repressors, while isoform 1 is an activator. Plays a role in spermatogenesis and is involved in spermatid maturation. Binding of isoform 1 (activator) to CRE is increased by CREB3L4. The CREM isoform 1-CREB3L4 heterodimer functions through CRE and may recruit HIRA to CRE to regulate histone exchange. Plays a role in the regulation of the circadian clock: acts as a transcriptional repressor of the core circadian component PER1 by directly binding to cAMP response elements in its promoter. In Mus musculus (Mouse), this protein is cAMP-responsive element modulator (Crem).